The primary structure comprises 88 residues: Gene 86 protein (88 aa).

Positions 64–88 (WRGNPSAYDDEVGDLEGFETQHSDY) are disordered. Over residues 71 to 80 (YDDEVGDLEG) the composition is skewed to acidic residues.

The protein is Gene 86 protein (86) of Mycobacterium (Mycobacteriophage L5).